A 510-amino-acid polypeptide reads, in one-letter code: MIELTVAQIAEIVGGAVADISPQDAAHRRVTGTVEFDSRAIGPGGLFLALPGARADGHDHAASAVAAGAAVVLAARPVGVPAIVVPPVAAPNVLAGVLEHDNDGSGAAVLAALAKLATAVAAQLVAGGLTIIGITGSSGKTSTKDLMAAVLAPLGEVVAPPGSFNNELGHPWTVLRATRRTDYLILEMAARHHGNIAALAEIAPPSIGVVLNVGTAHLGEFGSREVIAQTKAELPQAVPHSGAVVLNADDPAVAAMAKLTAARVVRVSRDNTGDVWAGPVSLDELARPRFTLHAHDAQAEVRLGVCGDHQVTNALCAAAVALECGASVEQVAAALTAAPPVSRHRMQVTTRGDGVTVIDDAYNANPDSMRAGLQALAWIAHQPEATRRSWAVLGEMAELGEDAIAEHDRIGRLAVRLDVSRLVVVGTGRSISAMHHGAVLEGAWGSGEATADHGADRTAVNVADGDAALALLRAELRPGDVVLVKASNAAGLGAVADALVADDTCGSVRP.

Position 136-142 (136-142) interacts with ATP; the sequence is GSSGKTS.

It belongs to the MurCDEF family. MurF subfamily.

Its subcellular location is the cytoplasm. It carries out the reaction D-alanyl-D-alanine + UDP-N-acetyl-alpha-D-muramoyl-L-alanyl-gamma-D-glutamyl-meso-2,6-diaminopimelate + ATP = UDP-N-acetyl-alpha-D-muramoyl-L-alanyl-gamma-D-glutamyl-meso-2,6-diaminopimeloyl-D-alanyl-D-alanine + ADP + phosphate + H(+). It functions in the pathway cell wall biogenesis; peptidoglycan biosynthesis. In terms of biological role, involved in cell wall formation. Catalyzes the final step in the synthesis of UDP-N-acetylmuramoyl-pentapeptide, the precursor of murein. This Mycobacterium bovis (strain ATCC BAA-935 / AF2122/97) protein is UDP-N-acetylmuramoyl-tripeptide--D-alanyl-D-alanine ligase.